A 385-amino-acid polypeptide reads, in one-letter code: Isomaltose glucohydrolase (385 aa).

W125 serves as a coordination point for substrate. The active-site Proton acceptor is the D175. E178 serves as the catalytic Proton donor. E335 serves as the catalytic Proton acceptor.

The protein belongs to the glycosyl hydrolase 15 family.

It localises to the cytoplasm. It catalyses the reaction isomaltose + H2O = beta-D-glucose + D-glucose. Functionally, involved in the intracellular degradation of the cyclic tetrasaccharide cyclobis-(1-6)-alpha-nigerosyl (CNN) formed extracellularly from starch. Catalyzes the hydrolysis of alpha-1,6-glucosidic linkage from the non-reducing end of isomaltose to yield beta-D-glucose and D-glucose. Can also act on panose and isomaltotriose at a lower rate. It displays low or no activity toward CNN and the general GH15 enzyme substrates such as maltose, soluble starch or dextran. This chain is Isomaltose glucohydrolase, found in Kribbella flavida (strain DSM 17836 / JCM 10339 / NBRC 14399).